Here is a 478-residue protein sequence, read N- to C-terminus: Cytochrome c-552 (478 aa).

Positions 1 to 26 are cleaved as a signal peptide; that stretch reads MTRIKINARRIFSLLIPFFFFTSVHA. Histidine 94 serves as a coordination point for heme c. Cysteine 122, cysteine 125, and lysine 126 together coordinate heme. Residues cysteine 160, cysteine 163, histidine 164, cysteine 209, cysteine 212, and histidine 213 each coordinate heme c. Ca(2+)-binding residues include glutamate 215, tyrosine 216, lysine 261, and glutamine 263. Tyrosine 216 contributes to the substrate binding site. Histidine 264 is a binding site for substrate. Histidine 275, cysteine 282, cysteine 285, histidine 286, histidine 301, cysteine 314, cysteine 317, histidine 318, and histidine 393 together coordinate heme c.

The protein belongs to the cytochrome c-552 family. Requires Ca(2+) as cofactor. The cofactor is heme c.

Its subcellular location is the periplasm. It catalyses the reaction 6 Fe(III)-[cytochrome c] + NH4(+) + 2 H2O = 6 Fe(II)-[cytochrome c] + nitrite + 8 H(+). It participates in nitrogen metabolism; nitrate reduction (assimilation). Its function is as follows. Catalyzes the reduction of nitrite to ammonia, consuming six electrons in the process. This is Cytochrome c-552 from Shigella flexneri.